The primary structure comprises 643 residues: Threonine--tRNA ligase (643 aa).

The region spanning 1-61 (MPIITLPDGS…SEDSSLEIIT (61 aa)) is the TGS domain. The interval 243–534 (DHRRIGKALD…ITEEYAGFFP (292 aa)) is catalytic. Residues C334, H385, and H511 each coordinate Zn(2+).

Belongs to the class-II aminoacyl-tRNA synthetase family. Homodimer. Zn(2+) serves as cofactor.

The protein resides in the cytoplasm. It carries out the reaction tRNA(Thr) + L-threonine + ATP = L-threonyl-tRNA(Thr) + AMP + diphosphate + H(+). Catalyzes the attachment of threonine to tRNA(Thr) in a two-step reaction: L-threonine is first activated by ATP to form Thr-AMP and then transferred to the acceptor end of tRNA(Thr). Also edits incorrectly charged L-seryl-tRNA(Thr). This chain is Threonine--tRNA ligase, found in Actinobacillus pleuropneumoniae serotype 7 (strain AP76).